The sequence spans 303 residues: Inner kinetochore subunit mal2 (303 aa).

It belongs to the CENP-O/MCM21 family. Component of the heterotetrameric kinetochore subcomplex COMA, which consists of fta2, fta7, mal2 and mis17. The COMA subcomplex is part of a larger constitutive centromere-associated network (CCAN) (also known as central kinetochore Sim4 complex in fission yeast), which is composed of at least cnl2, cnp3, cnp20, fta1, fta2, fta3, fta4, fta6, fta7, mal2, mhf1, mhf2, mis6, mis15, mis17, sim4 and wip1.

It is found in the nucleus. The protein resides in the chromosome. It localises to the centromere. Its subcellular location is the kinetochore. In terms of biological role, component of the kinetochore, a multiprotein complex that assembles on centromeric DNA and attaches chromosomes to spindle microtubules, mediating chromosome segregation and sister chromatid segregation during meiosis and mitosis. Component of the inner kinetochore COMA complex, which connects centromere-associated proteins and the outer kinetochore. COMA interacts with other inner kinetochore proteins to form the inner kinetochore constitutive centromere-associated network (CCAN), which serves as a structural platform for outer kinetochore assembly. The chain is Inner kinetochore subunit mal2 (mal2) from Schizosaccharomyces pombe (strain 972 / ATCC 24843) (Fission yeast).